We begin with the raw amino-acid sequence, 254 residues long: Short-chain dehydrogenase srdF (254 aa).

Residues Ile18, Ser37, Glu67, Asn95, Tyr167, Lys171, Val199, and Thr201 each contribute to the NADP(+) site. The active-site Proton donor is the Tyr167. Lys171 acts as the Lowers pKa of active site Tyr in catalysis.

Belongs to the short-chain dehydrogenases/reductases (SDR) family.

Its function is as follows. Short-chain dehydrogenase; part of the gene cluster that mediates the biosynthesis of sordarial, a salicylic aldehyde structurally related to the phytotoxin pyriculol. The most interesting aspect of this pathway is formation of an aromatic product from the highly reducing polyketide synthase srdA. SrdA synthesizes a reduced polyketide chain from one molecule of acetyl-CoA and five molecules of malonyl-CoA. The polyketide chain is then reductively released as an aldehyde. The oxidoreductases srdC, srdD and srdE then oxidize one of the hydroxy groups to facilitate the intramolecular aldol condensation, followed by dehydration to yield a salicylic aldehyde. This aldehyde can undergo facile reduction by endogenous reductases to yield the alcohol 1-hydroxy-2-hydroxymethyl-3-pent-1,3-dienylbenzene. The flavin-dependent srdI counteract against the propensity of the aldehydes to be reduced under physiological conditions and is responsible for reoxidizing 1-hydroxy-2-hydroxymethyl-3-pent-1,3-dienylbenzene back to the salicylic aldehyde. This salicylic aldehyde is then selectively epoxidized by the cupin-domain-containing oxidoreductase srdB to yield the epoxide, which can be hydrolyzed stereoselectively by the hydrolase srdG to give the final product sordarial. This is Short-chain dehydrogenase srdF from Neurospora crassa (strain ATCC 24698 / 74-OR23-1A / CBS 708.71 / DSM 1257 / FGSC 987).